The following is a 342-amino-acid chain: Elongation factor Ts (342 aa).

The involved in Mg(2+) ion dislocation from EF-Tu stretch occupies residues 79–82 (TDFV).

Belongs to the EF-Ts family.

Its subcellular location is the cytoplasm. Its function is as follows. Associates with the EF-Tu.GDP complex and induces the exchange of GDP to GTP. It remains bound to the aminoacyl-tRNA.EF-Tu.GTP complex up to the GTP hydrolysis stage on the ribosome. This Lactococcus lactis subsp. lactis (strain IL1403) (Streptococcus lactis) protein is Elongation factor Ts (tsf).